The primary structure comprises 505 residues: Alpha-1-syntrophin (505 aa).

Positions 1-77 (MASGRRAPRT…AEPGAASPPL (77 aa)) are disordered. 2 PH domains span residues 6-269 (RAPR…AQVN) and 293-401 (DIKR…DGCH). In terms of domain architecture, PDZ spans 87–170 (RVTVRKADAG…EVVLEVKYMK (84 aa)). 5 positions are modified to phosphoserine: Ser101, Ser184, Ser189, Ser193, and Ser200. Residues 180-211 (ASGTSVGWDSPPASPLQRQPSSPGPPPRDLRD) form a disordered region. The 57-residue stretch at 449–505 (PFEKLQMSSDDGASLLFLDFGGAEGEIQLDLHSCPKTMVFIIHSFLSAKVTRLGLLA) folds into the SU domain. The segment at 483-505 (PKTMVFIIHSFLSAKVTRLGLLA) is calmodulin-binding.

The protein belongs to the syntrophin family. As to quaternary structure, monomer and homodimer. Interacts with the dystrophin related protein DTNA; SGCG of the dystrophin glycoprotein complex; NOS1; GRB2; GA; TGFA; MAPK12 and the sodium channel proteins SCN4A and SCN5A. Interacts with the dystrophin protein DMD in a calmodulin dependent manner and with related protein UTRN; SGCA of the dystrophin glycoprotein complex; F-actin; calmodulin and with the other members of the syntrophin family SNTB1 and SNTB2. Interacts with MYOC; regulates muscle hypertrophy. Interacts with DTNB. Phosphorylated by CaM-kinase II. Phosphorylation may inhibit the interaction with DMD.

It is found in the cell membrane. Its subcellular location is the sarcolemma. It localises to the cell junction. The protein resides in the cytoplasm. The protein localises to the cytoskeleton. Functionally, adapter protein that binds to and probably organizes the subcellular localization of a variety of membrane proteins. May link various receptors to the actin cytoskeleton and the extracellular matrix via the dystrophin glycoprotein complex. Plays an important role in synapse formation and in the organization of UTRN and acetylcholine receptors at the neuromuscular synapse. Binds to phosphatidylinositol 4,5-bisphosphate. The protein is Alpha-1-syntrophin (SNTA1) of Bos taurus (Bovine).